The primary structure comprises 419 residues: L-cysteine:1D-myo-inositol 2-amino-2-deoxy-alpha-D-glucopyranoside ligase (419 aa).

A disordered region spans residues 1-20; that stretch reads MRSWSVPEVPALPGRGPRVH. Position 44 (cysteine 44) interacts with Zn(2+). L-cysteinyl-5'-AMP is bound by residues 44-47, threonine 59, and 82-84; these read CGIT and NVT. Residues 46–56 carry the 'HIGH' region motif; the sequence is ITPYDATHLGH. A 'ERGGDP' region motif is present at residues 191–196; the sequence is ERGGDP. Residue tryptophan 232 coordinates L-cysteinyl-5'-AMP. Cysteine 236 contacts Zn(2+). L-cysteinyl-5'-AMP is bound at residue 254-256; that stretch reads GSD. Histidine 261 lines the Zn(2+) pocket. Valine 289 is a binding site for L-cysteinyl-5'-AMP. Positions 295 to 299 match the 'KMSKS' region motif; that stretch reads KMSKS.

It belongs to the class-I aminoacyl-tRNA synthetase family. MshC subfamily. As to quaternary structure, monomer. Zn(2+) is required as a cofactor.

It catalyses the reaction 1D-myo-inositol 2-amino-2-deoxy-alpha-D-glucopyranoside + L-cysteine + ATP = 1D-myo-inositol 2-(L-cysteinylamino)-2-deoxy-alpha-D-glucopyranoside + AMP + diphosphate + H(+). Its function is as follows. Catalyzes the ATP-dependent condensation of GlcN-Ins and L-cysteine to form L-Cys-GlcN-Ins. The protein is L-cysteine:1D-myo-inositol 2-amino-2-deoxy-alpha-D-glucopyranoside ligase of Kineococcus radiotolerans (strain ATCC BAA-149 / DSM 14245 / SRS30216).